The following is a 565-amino-acid chain: Phospholipase B-like protein C (565 aa).

The first 21 residues, 1 to 21 (MNKIIILISLFLNFLFGYVVC), serve as a signal peptide directing secretion. N-linked (GlcNAc...) asparagine glycans are attached at residues Asn-53, Asn-84, Asn-118, Asn-200, Asn-201, Asn-211, Asn-266, Asn-302, Asn-406, and Asn-485.

Belongs to the phospholipase B-like family.

The protein localises to the secreted. Probable phospholipase. In Dictyostelium discoideum (Social amoeba), this protein is Phospholipase B-like protein C (plbC).